The primary structure comprises 183 residues: Hypoxanthine-guanine phosphoribosyltransferase (183 aa).

Diphosphate is bound by residues arginine 47 and glycine 48. Residues glutamate 103 and aspartate 104 each coordinate Mg(2+). The active-site Proton acceptor is the aspartate 107. GMP contacts are provided by residues lysine 134, 155–156, and aspartate 162; that span reads FV. Residue arginine 168 coordinates diphosphate.

The protein belongs to the purine/pyrimidine phosphoribosyltransferase family. Requires Mg(2+) as cofactor.

The protein localises to the cytoplasm. The catalysed reaction is IMP + diphosphate = hypoxanthine + 5-phospho-alpha-D-ribose 1-diphosphate. It catalyses the reaction GMP + diphosphate = guanine + 5-phospho-alpha-D-ribose 1-diphosphate. It participates in purine metabolism; IMP biosynthesis via salvage pathway; IMP from hypoxanthine: step 1/1. It functions in the pathway purine metabolism; GMP biosynthesis via salvage pathway; GMP from guanine: step 1/1. In terms of biological role, purine salvage pathway enzyme that catalyzes the transfer of the ribosyl-5-phosphate group from 5-phospho-alpha-D-ribose 1-diphosphate (PRPP) to the N9 position of the 6-oxopurines hypoxanthine and guanine to form the corresponding ribonucleotides IMP (inosine 5'-monophosphate) and GMP (guanosine 5'-monophosphate), with the release of PPi. The chain is Hypoxanthine-guanine phosphoribosyltransferase (hpt) from Lactococcus lactis subsp. lactis (strain IL1403) (Streptococcus lactis).